We begin with the raw amino-acid sequence, 222 residues long: Interleukin-12 subunit alpha (222 aa).

The N-terminal stretch at 1-25 (MCPLRSLFLMATLVFLNHLDHLSLA) is a signal peptide. 3 cysteine pairs are disulfide-bonded: Cys-40–Cys-113, Cys-67–Cys-199, and Cys-88–Cys-126. 2 N-linked (GlcNAc...) asparagine glycosylation sites follow: Asn-96 and Asn-174.

It belongs to the IL-6 superfamily. As to quaternary structure, heterodimer with IL12B; disulfide-linked. This heterodimer is known as interleukin IL-12. Heterodimer with EBI3/IL27B; not disulfide-linked. This heterodimer is known as interleukin IL-35. Interacts with NBR1; this interaction promotes IL-12 secretion.

The protein resides in the secreted. Functionally, heterodimerizes with IL12B to form the IL-12 cytokine or with EBI3/IL27B to form the IL-35 cytokine. IL-12 is primarily produced by professional antigen-presenting cells (APCs) such as B-cells and dendritic cells (DCs) as well as macrophages and granulocytes and regulates T-cell and natural killer-cell responses, induces the production of interferon-gamma (IFN-gamma), favors the differentiation of T-helper 1 (Th1) cells and is an important link between innate resistance and adaptive immunity. Mechanistically, exerts its biological effects through a receptor composed of IL12R1 and IL12R2 subunits. Binding to the receptor results in the rapid tyrosine phosphorylation of a number of cellular substrates including the JAK family kinases TYK2 and JAK2. In turn, recruited STAT4 gets phosphorylated and translocates to the nucleus where it regulates cytokine/growth factor responsive genes. As part of IL-35, plays essential roles in maintaining the immune homeostasis of the liver microenvironment and also functions as an immune-suppressive cytokine. Mediates biological events through unconventional receptors composed of IL12RB2 and gp130/IL6ST heterodimers or homodimers. Signaling requires the transcription factors STAT1 and STAT4, which form a unique heterodimer that binds to distinct DNA sites. This Lama glama (Llama) protein is Interleukin-12 subunit alpha (IL12A).